The following is a 508-amino-acid chain: Transcriptional regulatory protein moc3 (508 aa).

Residues 15–43 (NRTGSINSNPLYIPNPNVEPTPKPTKRRT) are disordered. Residues 46–76 (GCLTCRRRRIKCDETKPFCLNCTKTNRECEG) constitute a DNA-binding region (zn(2)-C6 fungal-type). Disordered regions lie at residues 110-146 (ASSS…STVT) and 174-193 (NHNV…KPSV). Over residues 176–193 (NVPTNNSSSATSSTKPSV) the composition is skewed to low complexity.

In terms of assembly, interacts with zfs1.

It localises to the nucleus. Its function is as follows. Induces sexual development and ascus formation. Also involved in calcium homeostasis. The polypeptide is Transcriptional regulatory protein moc3 (moc3) (Schizosaccharomyces pombe (strain 972 / ATCC 24843) (Fission yeast)).